Reading from the N-terminus, the 307-residue chain is 2,4-diacetylphloroglucinol hydrolase (307 aa).

4 residues coordinate Zn(2+): His142, Glu173, His283, and Glu287.

Belongs to the DAPG/phloretin hydrolase family. Zn(2+) serves as cofactor.

The enzyme catalyses 2,4-diacetylphloroglucinol + H2O = 2-acetylphloroglucinol + acetate. With respect to regulation, activity is strongly reduced by pyoluteorin, an antifungal compound produced by the bacterium. Functionally, hydrolase that specifically degrades the potent antimicrobial compound 2,4-diacetylphloroglucinol (DAPG) to equimolar amounts of mildly toxic monoacetylphloroglucinol (MAPG) and acetate. Does not degrade other compounds with structures similar to DAPG, such as MAPG and triacetylphloroglucinol, suggesting strict substrate specificity. Degradation of DAPG to MAPG may provide an additional means of fine-tuning levels of this antibiotic or may help avoid accumulation of a metabolite that at high levels may become toxic to the producing bacterium. This is 2,4-diacetylphloroglucinol hydrolase from Pseudomonas protegens (strain DSM 19095 / LMG 27888 / CFBP 6595 / CHA0).